Here is a 213-residue protein sequence, read N- to C-terminus: Putative transmembrane protein DDB_G0267860 (213 aa).

The N-terminal stretch at 1–22 (MKTKILLLNFIIIFFLINVNLA) is a signal peptide. Topologically, residues 23 to 191 (IKKDSPFKEI…SSKFDSSTSS (169 aa)) are extracellular. N-linked (GlcNAc...) asparagine glycosylation is found at Asn-92 and Asn-114. Residues 192 to 212 (ISINTLAILSLLFLIFINKLI) form a helical membrane-spanning segment. A topological domain (cytoplasmic) is located at residue Asn-213.

It is found in the membrane. In Dictyostelium discoideum (Social amoeba), this protein is Putative transmembrane protein DDB_G0267860.